A 651-amino-acid chain; its full sequence is Bromodomain-containing protein 7 (651 aa).

Lys-21 is covalently cross-linked (Glycyl lysine isopeptide (Lys-Gly) (interchain with G-Cter in SUMO2)). The interval 34-103 (VTELSTGSSG…RDRAENEVDR (70 aa)) is disordered. Positions 35–45 (TELSTGSSGHD) are enriched in polar residues. Residues 47 to 57 (SLFEDRSDHDK) are compositionally biased toward basic and acidic residues. Over residues 58–69 (HKDRKRKKRKKG) the composition is skewed to basic residues. The Nuclear localization signal signature appears at 65-96 (KRKKGEKQAPGEEKGRKRRRVKEDKKKRDRDR). A compositionally biased stretch (basic and acidic residues) spans 70 to 103 (EKQAPGEEKGRKRRRVKEDKKKRDRDRAENEVDR). Glycyl lysine isopeptide (Lys-Gly) (interchain with G-Cter in SUMO2) cross-links involve residues Lys-127, Lys-186, Lys-197, Lys-201, Lys-212, and Lys-241. In terms of domain architecture, Bromo spans 131 to 235 (VEQTPLQEAL…HSGMKILSQE (105 aa)). The tract at residues 252-316 (KTRKQKERTD…RSSNSEREHE (65 aa)) is disordered. 2 positions are modified to phosphoserine: Ser-279 and Ser-289. The segment covering 290–316 (PAKDNKRKDKDVLEDKWRSSNSEREHE) has biased composition (basic and acidic residues). Lys-305 is covalently cross-linked (Glycyl lysine isopeptide (Lys-Gly) (interchain with G-Cter in SUMO2)). The residue at position 328 (Lys-328) is an N6-acetyllysine. Lys-344 participates in a covalent cross-link: Glycyl lysine isopeptide (Lys-Gly) (interchain with G-Cter in SUMO2). Residue Ser-380 is modified to Phosphoserine. Lys-389 is covalently cross-linked (Glycyl lysine isopeptide (Lys-Gly) (interchain with G-Cter in SUMO2)). A phosphoserine mark is found at Ser-475, Ser-482, and Ser-483. Positions 536–567 (SEEAEVFQRKLDETTRLLRELQEAQNERLSTR) form a coiled coil. Ser-621 is subject to Phosphoserine.

As to quaternary structure, interacts with IRF2 and HNRPUL1. Interacts (via N-terminus) with TP53. Interacts (via C-terminus) with EP300. Interacts with BRCA1. Interacts (via bromo domain) with histone H3 (via N-terminus) acetylated at 'Lys-14' (H3K14ac). Has low affinity for histone H3 acetylated at 'Lys-9' (H3K9ac). Has the highest affinity for histone H3 that is acetylated both at 'Lys-9' (H3K9ac) and at 'Lys-14' (H3K14ac). Has very low affinity for non-acetylated histone H3. Interacts (via bromo domain) with histone H4 (via N-terminus) acetylated at 'Lys-8' (H3K8ac) (in vitro). Interacts with TRIM24, PTPN13 and DVL1. Identified in a complex with SMARCA4/BRG1, SMARCC1/BAF155, SMARCE1/BAF57, DPF2/BAF45D and ARID2, subunits of the SWI/SNF-B (PBAF) chromatin remodeling complex. In terms of tissue distribution, ubiquitous.

The protein resides in the nucleus. Its subcellular location is the chromosome. Its function is as follows. Acts both as coactivator and as corepressor. May play a role in chromatin remodeling. Transcriptional corepressor that down-regulates the expression of target genes. Binds to target promoters, leading to increased histone H3 acetylation at 'Lys-9' (H3K9ac). Binds to the ESR1 promoter. Recruits BRCA1 and POU2F1 to the ESR1 promoter. Coactivator for TP53-mediated activation of transcription of a set of target genes. Required for TP53-mediated cell-cycle arrest in response to oncogene activation. Promotes acetylation of TP53 at 'Lys-382', and thereby promotes efficient recruitment of TP53 to target promoters. Inhibits cell cycle progression from G1 to S phase. Activator of the Wnt signaling pathway in a DVL1-dependent manner by negatively regulating the GSK3B phosphotransferase activity. Induces dephosphorylation of GSK3B at 'Tyr-216'. Down-regulates TRIM24-mediated activation of transcriptional activation by AR. In Mus musculus (Mouse), this protein is Bromodomain-containing protein 7 (Brd7).